Here is a 356-residue protein sequence, read N- to C-terminus: sn-glycerol-3-phosphate import ATP-binding protein UgpC (356 aa).

The region spanning 4-235 is the ABC transporter domain; sequence LKLQAVTKSW…PASRFVASFI (232 aa). 37-44 lines the ATP pocket; it reads GPSGCGKS.

The protein belongs to the ABC transporter superfamily. sn-glycerol-3-phosphate importer (TC 3.A.1.1.3) family. The complex is composed of two ATP-binding proteins (UgpC), two transmembrane proteins (UgpA and UgpE) and a solute-binding protein (UgpB).

It is found in the cell inner membrane. The enzyme catalyses sn-glycerol 3-phosphate(out) + ATP + H2O = sn-glycerol 3-phosphate(in) + ADP + phosphate + H(+). In terms of biological role, part of the ABC transporter complex UgpBAEC involved in sn-glycerol-3-phosphate (G3P) import. Responsible for energy coupling to the transport system. The chain is sn-glycerol-3-phosphate import ATP-binding protein UgpC from Salmonella paratyphi A (strain ATCC 9150 / SARB42).